Consider the following 940-residue polypeptide: Isoleucine--tRNA ligase (940 aa).

The 'HIGH' region signature appears at 58 to 68; sequence PYANGDIHIGH. Glu-564 is a binding site for L-isoleucyl-5'-AMP. The short motif at 605–609 is the 'KMSKS' region element; the sequence is KMSKS. Lys-608 is a binding site for ATP. Zn(2+) is bound by residues Cys-903, Cys-906, Cys-923, and Cys-926.

This sequence belongs to the class-I aminoacyl-tRNA synthetase family. IleS type 1 subfamily. As to quaternary structure, monomer. Zn(2+) serves as cofactor.

The protein localises to the cytoplasm. It carries out the reaction tRNA(Ile) + L-isoleucine + ATP = L-isoleucyl-tRNA(Ile) + AMP + diphosphate. Catalyzes the attachment of isoleucine to tRNA(Ile). As IleRS can inadvertently accommodate and process structurally similar amino acids such as valine, to avoid such errors it has two additional distinct tRNA(Ile)-dependent editing activities. One activity is designated as 'pretransfer' editing and involves the hydrolysis of activated Val-AMP. The other activity is designated 'posttransfer' editing and involves deacylation of mischarged Val-tRNA(Ile). This chain is Isoleucine--tRNA ligase, found in Shewanella pealeana (strain ATCC 700345 / ANG-SQ1).